Reading from the N-terminus, the 106-residue chain is MTPCFINGKCAEQLTSTTAYKLLFLPPLTEHTTSLYPKQYPDKQLVLLLDPRSGTRLTYYSQPFFIALSSPYSGSSLSAKFHFAPHLYAFLVVASITRSDIAYSVN.

Its subcellular location is the mitochondrion. This is an uncharacterized protein from Arabidopsis thaliana (Mouse-ear cress).